A 148-amino-acid chain; its full sequence is Lysozyme-like protein 6 (148 aa).

The N-terminal stretch at 1 to 19 is a signal peptide; sequence MLKALFICVASCLLVVNDG. Residues 20-148 form the C-type lysozyme domain; that stretch reads NIIHRCSLAK…SYWMTGCHLG (129 aa). 4 cysteine pairs are disulfide-bonded: Cys25–Cys145, Cys49–Cys133, Cys83–Cys98, and Cys94–Cys112. The active site involves Glu54. An N-linked (GlcNAc...) asparagine glycan is attached at Asn58. The active site involves Asp71.

This sequence belongs to the glycosyl hydrolase 22 family. As to quaternary structure, monomer. Expressed strongly in testis and epididymis and weakly in seminal vesicle, vas deferens, kidney and spleen. Highly expressed in primary spermatocytes and round spermatids (at protein level).

The protein resides in the secreted. The protein localises to the cell surface. It localises to the cell projection. It is found in the cilium. Its subcellular location is the flagellum. It carries out the reaction Hydrolysis of (1-&gt;4)-beta-linkages between N-acetylmuramic acid and N-acetyl-D-glucosamine residues in a peptidoglycan and between N-acetyl-D-glucosamine residues in chitodextrins.. Its function is as follows. May be involved sperm-egg plasma membrane adhesion and fusion during fertilization. Exhibits bacteriolytic activity in vitro against Micrococcus luteus and Staphylococcus aureus. Shows weak bacteriolytic activity against Gram-positive bacteria at physiological pH. Bacteriolytic activity is pH-dependent, with a maximum at around pH 5.6. This chain is Lysozyme-like protein 6 (Lyzl6), found in Mus musculus (Mouse).